Reading from the N-terminus, the 267-residue chain is MSEQFLTFPNIDPVALQLGPVSLHWYGIMYLLGFGFAYWLGTKRAKNSNGVWSVEQVDQLLFNGFWGVVLGGRIGDVFFYSFDRFLQDPLYLFRIWEGGMSFHGGLLGVIVAMLWTSRRQNRNFWQTADFIAPLIPFGLGLGRIGNFINDELWGRVTDVPWAIMFPSGGYLPRHPSQLYEAVLEGLVLFFILNGYIRKPRPTGSVAGLFLVGYGVFRFIVEYFREFDPNVNTAADLITRGQLLSLPMIIGGLVIMVVAYYRHRLSND.

3 helical membrane passes run valine 21–glycine 41, leucine 60–tyrosine 80, and isoleucine 95–tryptophan 115. Arginine 143 provides a ligand contact to a 1,2-diacyl-sn-glycero-3-phospho-(1'-sn-glycerol). 2 helical membrane-spanning segments follow: residues glycine 203–phenylalanine 223 and glycine 240–tyrosine 260.

The protein belongs to the Lgt family.

The protein resides in the cell inner membrane. The enzyme catalyses L-cysteinyl-[prolipoprotein] + a 1,2-diacyl-sn-glycero-3-phospho-(1'-sn-glycerol) = an S-1,2-diacyl-sn-glyceryl-L-cysteinyl-[prolipoprotein] + sn-glycerol 1-phosphate + H(+). Its pathway is protein modification; lipoprotein biosynthesis (diacylglyceryl transfer). In terms of biological role, catalyzes the transfer of the diacylglyceryl group from phosphatidylglycerol to the sulfhydryl group of the N-terminal cysteine of a prolipoprotein, the first step in the formation of mature lipoproteins. In Glaesserella parasuis serovar 5 (strain SH0165) (Haemophilus parasuis), this protein is Phosphatidylglycerol--prolipoprotein diacylglyceryl transferase.